The primary structure comprises 168 residues: DAZ-associated protein 2 (168 aa).

A compositionally biased stretch (low complexity) spans 1 to 13 (MNSKGQYPTQPTY). The tract at residues 1–25 (MNSKGQYPTQPTYPVQPPGNPVYPQ) is disordered. The PPAY signature appears at 39-42 (PPAY). Phosphoserine is present on serine 77.

Interacts with SOX6. Interacts with DAZ1 and DAZL. Interacts with IL17RB. May interact with FAM168B. Interacts with INCA1. Interacts with EIF4G1 and EIF4G2. Interacts (via PPAY motif) with NEDD4 (via WW domains). Interacts with transcription factor TCF4; the interaction results in localization of DAZAP2 to the nucleus. Interacts with transcription factors TCF7 and TCF7L1. Interacts with transcription factor LEF1. Interacts with serine/threonine-protein kinase HIPK2; the interaction results in phosphorylation of DAZAP2 which causes localization of DAZAP2 to the nucleus, reduces interaction of DAZAP2 with HIPK2 and prevents DAZAP2-dependent degradation of HIPK2. Interacts with ubiquitin ligase SIAH1; the interaction is decreased following phosphorylation of DAZAP2 by HIPK2. Interacts with TP53; the interaction is triggered by DNA damage. Post-translationally, ubiquitinated by SMURF2, leading to proteasomal degradation. Ubiquitinated by NEDD4, leading to proteasomal degradation. In terms of processing, following DNA damage, phosphorylated by HIPK2 which promotes DAZAP2 localization to the nucleus, reduces interaction of DAZAP2 with HIPK2 and SIAH1, and prevents DAZAP2-dependent ubiquitination of HIPK2 by E3 ubiquitin-protein ligase SIAH1 and subsequent HIPK2 proteasomal degradation. Widely expressed. Highly expressed in brain.

Its subcellular location is the cytoplasm. The protein resides in the nucleus. It localises to the nucleus speckle. It is found in the nuclear body. The protein localises to the stress granule. In terms of biological role, in unstressed cells, promotes SIAH1-mediated polyubiquitination and degradation of the serine/threonine-protein kinase HIPK2, probably by acting as a loading factor that potentiates complex formation between HIPK2 and ubiquitin ligase SIAH1. In response to DNA damage, localizes to the nucleus following phosphorylation by HIPK2 and modulates the expression of a subset of TP53/p53 target genes by binding to TP53 at target gene promoters. This limits the expression of a number of cell death-mediating TP53 target genes, reducing DNA damage-induced cell death. Enhances the binding of transcription factor TCF7L2/TCF4, a Wnt signaling pathway effector, to the promoters of target genes. Plays a role in stress granule formation. This Mus musculus (Mouse) protein is DAZ-associated protein 2 (Dazap2).